A 441-amino-acid chain; its full sequence is Peroxisome proliferator-activated receptor delta (441 aa).

Residues 1–58 form a disordered region; the sequence is MEQPPGEAAEVREEEEKKEVAEAEGAPELNGGPERSLPSSSYTDLSRSSSPPSLLDQL. The span at 9–21 shows a compositional bias: basic and acidic residues; it reads AEVREEEEKKEVA. Over residues 36–55 the composition is skewed to low complexity; sequence SLPSSSYTDLSRSSSPPSLL. Residues 70-145 constitute a DNA-binding region (nuclear receptor); that stretch reads LNMECRVCGD…LGMSHNAIRF (76 aa). NR C4-type zinc fingers lie at residues 74-94 and 111-133; these read CRVC…CEGC and CERI…FQKC. One can recognise an NR LBD domain in the interval 211-439; the sequence is FVIHDIETLW…HPLLQEIYKD (229 aa).

It belongs to the nuclear hormone receptor family. NR1 subfamily. As to quaternary structure, heterodimer with the retinoid X receptor. Interacts (via domain NR LBD) with CRY1 and CRY2 in a ligand-dependent manner. 'Lys-48'-linked polyubiquitinated; leading to proteasomal degradation. Deubiquitinated and stabilized by OTUD3.

It is found in the nucleus. In terms of biological role, ligand-activated transcription factor key mediator of energy metabolism in adipose tissues. Receptor that binds peroxisome proliferators such as hypolipidemic drugs and fatty acids. Has a preference for poly-unsaturated fatty acids, such as gamma-linoleic acid and eicosapentanoic acid. Once activated by a ligand, the receptor binds to promoter elements of target genes. Regulates the peroxisomal beta-oxidation pathway of fatty acids. Functions as a transcription activator for the acyl-CoA oxidase gene. Decreases expression of NPC1L1 once activated by a ligand. The chain is Peroxisome proliferator-activated receptor delta (PPARD) from Canis lupus familiaris (Dog).